Consider the following 200-residue polypeptide: Riboflavin kinase (200 aa).

The tract at residues 1 to 20 (MATARPSIVGPDSGPESPFP) is disordered. Residues Thr42 and Asn44 each contribute to the Mg(2+) site. Residue Glu110 is the Nucleophile of the active site.

The protein belongs to the flavokinase family. Zn(2+) serves as cofactor. Mg(2+) is required as a cofactor.

The enzyme catalyses riboflavin + ATP = FMN + ADP + H(+). It functions in the pathway cofactor biosynthesis; FMN biosynthesis; FMN from riboflavin (ATP route): step 1/1. Its function is as follows. Catalyzes the phosphorylation of riboflavin (vitamin B2) to form flavin mononucleotide (FMN) coenzyme. This Pyricularia oryzae (strain 70-15 / ATCC MYA-4617 / FGSC 8958) (Rice blast fungus) protein is Riboflavin kinase (FMN1).